The sequence spans 52 residues: U-scutigerotoxin(01)-Tl1a (52 aa).

An N-terminal signal peptide occupies residues 1-25 (MLAKAMSLLMMFLLVLVIGSVMVSA).

It belongs to the scutigerotoxin-01 family. In terms of processing, contains 1 disulfide bond. As to expression, expressed by the venom gland.

The protein localises to the secreted. The polypeptide is U-scutigerotoxin(01)-Tl1a (Thereuopoda longicornis (Long-legged centipede)).